The primary structure comprises 210 residues: Scoloptoxin SSD558 (210 aa).

The first 23 residues, 1-23, serve as a signal peptide directing secretion; the sequence is MNILLPSTLFVLLMFQIIGSGMG.

Post-translationally, contains 3 disulfide bonds. As to expression, expressed by the venom gland.

Its subcellular location is the secreted. This is Scoloptoxin SSD558 from Scolopendra dehaani (Thai centipede).